The following is a 92-amino-acid chain: YcgL domain-containing protein HS_0805 (92 aa).

One can recognise a YcgL domain in the interval 1–85; sequence MLCAIYKTKR…QQENLLEQER (85 aa).

This chain is YcgL domain-containing protein HS_0805, found in Histophilus somni (strain 129Pt) (Haemophilus somnus).